The sequence spans 302 residues: Mitochondrial glycine transporter (302 aa).

Solcar repeat units lie at residues 22 to 112 (HPVF…LKHH), 119 to 203 (PKPL…AKKL), and 213 to 297 (FSPV…MMEK). The next 6 helical transmembrane spans lie at 28–53 (FVCGSLSGTCSTLLFQPLDLVKTRLQ), 87–113 (GVSPSFLRCIPGVGLYFSTLYTLKHHF), 125–150 (VMLGAGSRTVAAVCMLPFTVVKTRYE), 178–201 (GLTATLMRDAPFSGIYLMFYTRAK), 217–243 (LNFGCGIVAGILASVATQPADVIKTHI), and 272–290 (GGLPRALRRTLMAAMAWTV).

The protein belongs to the mitochondrial carrier (TC 2.A.29) family. SLC25A38 subfamily.

The protein resides in the mitochondrion inner membrane. The enzyme catalyses glycine(in) = glycine(out). Functionally, mitochondrial glycine transporter that imports glycine into the mitochondrial matrix. Plays an important role in providing glycine for the first enzymatic step in heme biosynthesis, the condensation of glycine with succinyl-CoA to produce 5-aminolevulinate (ALA) in the mitochondrial matrix. Required during erythropoiesis. May play a role as pro-apoptotic protein that induces caspase-dependent apoptosis. The polypeptide is Mitochondrial glycine transporter (Xenopus tropicalis (Western clawed frog)).